The chain runs to 335 residues: Ferredoxin--NADP reductase (335 aa).

FAD is bound by residues aspartate 34, glutamine 42, tyrosine 47, alanine 87, phenylalanine 121, aspartate 287, and threonine 328.

It belongs to the ferredoxin--NADP reductase type 2 family. Homodimer. FAD serves as cofactor.

The enzyme catalyses 2 reduced [2Fe-2S]-[ferredoxin] + NADP(+) + H(+) = 2 oxidized [2Fe-2S]-[ferredoxin] + NADPH. The chain is Ferredoxin--NADP reductase from Rickettsia felis (strain ATCC VR-1525 / URRWXCal2) (Rickettsia azadi).